The primary structure comprises 158 residues: uncharacterized protein (158 aa).

2 disordered regions span residues Met-1–Trp-86 and Ala-138–Phe-158. A compositionally biased stretch (low complexity) spans Ser-7 to Ala-76.

This is an uncharacterized protein from Homo sapiens (Human).